A 191-amino-acid polypeptide reads, in one-letter code: Calcium-activated potassium channel subunit beta-1 (191 aa).

The Cytoplasmic segment spans residues 1 to 18; it reads MGKKLVMAQKRGETRALC. The chain crosses the membrane as a helical span at residues 19–39; the sequence is LGVAMVVCAAITYYVLGTTVL. Residues 40–155 lie on the Extracellular side of the membrane; it reads PLYQKSVWTQ…VVYQRLYGPQ (116 aa). 2 N-linked (GlcNAc...) asparagine glycosylation sites follow: asparagine 80 and asparagine 142. A helical membrane pass occupies residues 156-176; sequence VLLFSFFWPTFLLTGGLLLIA. The Cytoplasmic segment spans residues 177–191; the sequence is MVKLNRSLSILAAQK.

It belongs to the KCNMB (TC 8.A.14.1) family. KCNMB1 subfamily. Interacts with KCNMA1 tetramer. There are probably 4 molecules of KCMNB1 per KCNMA1 tetramer. N-glycosylated. As to expression, expressed in many tissues containing smooth muscles. In brain and heart, it is not expressed except in the vasculature, such as cerebral arteries, aorta and corona arteries.

The protein resides in the membrane. Regulatory subunit of the calcium activated potassium KCNMA1 (maxiK) channel. Modulates the calcium sensitivity and gating kinetics of KCNMA1, thereby contributing to KCNMA1 channel diversity. Increases the apparent Ca(2+)/voltage sensitivity of the KCNMA1 channel. It also modifies KCNMA1 channel kinetics and alters its pharmacological properties. It slows down the activation and the deactivation kinetics of the channel. Acts as a negative regulator of smooth muscle contraction by enhancing the calcium sensitivity to KCNMA1. Its presence is also a requirement for internal binding of the KCNMA1 channel opener dehydrosoyasaponin I (DHS-1) triterpene glycoside and for external binding of the agonist hormone 17-beta-estradiol (E2). Increases the binding activity of charybdotoxin (CTX) toxin to KCNMA1 peptide blocker by increasing the CTX association rate and decreasing the dissociation rate. This chain is Calcium-activated potassium channel subunit beta-1 (Kcnmb1), found in Mus musculus (Mouse).